The primary structure comprises 356 residues: sn-glycerol-3-phosphate import ATP-binding protein UgpC (356 aa).

The ABC transporter domain occupies 4-235 (LKLQAVTKSW…PASLFVASFI (232 aa)). 37–44 (GPSGCGKS) contributes to the ATP binding site.

The protein belongs to the ABC transporter superfamily. sn-glycerol-3-phosphate importer (TC 3.A.1.1.3) family. As to quaternary structure, the complex is composed of two ATP-binding proteins (UgpC), two transmembrane proteins (UgpA and UgpE) and a solute-binding protein (UgpB).

Its subcellular location is the cell inner membrane. The catalysed reaction is sn-glycerol 3-phosphate(out) + ATP + H2O = sn-glycerol 3-phosphate(in) + ADP + phosphate + H(+). In terms of biological role, part of the ABC transporter complex UgpBAEC involved in sn-glycerol-3-phosphate (G3P) import. Responsible for energy coupling to the transport system. This is sn-glycerol-3-phosphate import ATP-binding protein UgpC from Escherichia coli O6:H1 (strain CFT073 / ATCC 700928 / UPEC).